The primary structure comprises 183 residues: A-type ATP synthase subunit E (183 aa).

This sequence belongs to the V-ATPase E subunit family. As to quaternary structure, has multiple subunits with at least A(3), B(3), C, D, E, F, H, I and proteolipid K(x).

It localises to the cell membrane. Component of the A-type ATP synthase that produces ATP from ADP in the presence of a proton gradient across the membrane. The chain is A-type ATP synthase subunit E from Methanococcoides burtonii (strain DSM 6242 / NBRC 107633 / OCM 468 / ACE-M).